An 885-amino-acid chain; its full sequence is DDT domain-containing protein DDB_G0282237 (885 aa).

Positions 20 to 125 (EEYFVIKFTK…GEIVSFKKAN (106 aa)) constitute a WAC domain. 3 disordered regions span residues 141–184 (ESDE…INAL), 201–264 (DDEN…SVRK), and 367–431 (LEDT…KENE). Over residues 154–180 (SSSSSSTTTTTTTPTTPPTTTTTTSSS) the composition is skewed to low complexity. The span at 210–264 (KNNGDTSSDKKGEKEKEKEKEKEKEKEKEKEKEKEKEKEKEKEKEKDSDTKSVRK) shows a compositional bias: basic and acidic residues. Residues 217–260 (SDKKGEKEKEKEKEKEKEKEKEKEKEKEKEKEKEKEKEKDSDTK) adopt a coiled-coil conformation. Over residues 367 to 379 (LEDTEEESVDIES) the composition is skewed to acidic residues. Over residues 380–396 (NDNSNSNGNSNSNNNLD) the composition is skewed to low complexity. Positions 443-503 (SNTFGDFLMV…MKTIFTLPSY (61 aa)) constitute a DDT domain. Residues 530–565 (FQNEVKRIAIEEKEKQEKLKQLEEQNIRMLNLANEL) adopt a coiled-coil conformation. Disordered stretches follow at residues 562 to 632 (ANEL…WKEE) and 707 to 744 (KQDD…QKKP). Residues 567-577 (GSDDEDDEMKL) are compositionally biased toward acidic residues. Residues 578–603 (DEDGNEIKKDVEMKDNDGTKDTKKDD) show a composition bias toward basic and acidic residues. Coiled-coil stretches lie at residues 593–628 (NDGT…GEEE) and 674–782 (ASEK…RDRN). 2 stretches are compositionally biased toward acidic residues: residues 604–631 (EENE…EWKE) and 715–729 (AEDD…EEQQ).

The protein resides in the nucleus. This chain is DDT domain-containing protein DDB_G0282237, found in Dictyostelium discoideum (Social amoeba).